The sequence spans 273 residues: Dermonecrotic toxin LapSicTox-alphaII1 (273 aa).

The active site involves histidine 5. Positions 25 and 27 each coordinate Mg(2+). Histidine 41 (nucleophile) is an active-site residue. Cystine bridges form between cysteine 45-cysteine 51 and cysteine 47-cysteine 191. Aspartate 85 is a binding site for Mg(2+).

It belongs to the arthropod phospholipase D family. Class II subfamily. Mg(2+) is required as a cofactor. Expressed by the venom gland.

The protein resides in the secreted. It carries out the reaction an N-(acyl)-sphingosylphosphocholine = an N-(acyl)-sphingosyl-1,3-cyclic phosphate + choline. The catalysed reaction is an N-(acyl)-sphingosylphosphoethanolamine = an N-(acyl)-sphingosyl-1,3-cyclic phosphate + ethanolamine. The enzyme catalyses a 1-acyl-sn-glycero-3-phosphocholine = a 1-acyl-sn-glycero-2,3-cyclic phosphate + choline. It catalyses the reaction a 1-acyl-sn-glycero-3-phosphoethanolamine = a 1-acyl-sn-glycero-2,3-cyclic phosphate + ethanolamine. In terms of biological role, dermonecrotic toxins cleave the phosphodiester linkage between the phosphate and headgroup of certain phospholipids (sphingolipid and lysolipid substrates), forming an alcohol (often choline) and a cyclic phosphate. This toxin acts on sphingomyelin (SM). It may also act on ceramide phosphoethanolamine (CPE), lysophosphatidylcholine (LPC) and lysophosphatidylethanolamine (LPE), but not on lysophosphatidylserine (LPS), and lysophosphatidylglycerol (LPG). It acts by transphosphatidylation, releasing exclusively cyclic phosphate products as second products. Induces dermonecrosis, hemolysis, increased vascular permeability, edema, inflammatory response, and platelet aggregation. The protein is Dermonecrotic toxin LapSicTox-alphaII1 of Loxosceles apachea (Apache recluse spider).